We begin with the raw amino-acid sequence, 913 residues long: Striatin-interacting protein homolog (913 aa).

Low complexity-rich tracts occupy residues 177–188 (QQQQQQQQNENE), 195–204 (TNFTTTTTTT), and 791–811 (NNNN…NNDN). 2 disordered regions span residues 177–204 (QQQQ…TTTT) and 791–814 (NNNN…NGLT).

It belongs to the STRIP family.

The polypeptide is Striatin-interacting protein homolog (fam40) (Dictyostelium discoideum (Social amoeba)).